The sequence spans 112 residues: U15-hexatoxin-Hi1a (112 aa).

A signal peptide spans 1–18 (MNTLIAFAVLLLLSTTLG). The propeptide occupies 19–73 (DTDDKVSHEEIQERKELSGISEELLLQQLEAVEAALMEKERLEEMEEDGNSREKR). 3 cysteine pairs are disulfide-bonded: Cys74/Cys88, Cys81/Cys93, and Cys87/Cys107.

This sequence belongs to the neurotoxin 14 (magi-1) family. 08 (Ltx-4) subfamily. As to expression, expressed by the venom gland.

It localises to the secreted. In terms of biological role, probable ion channel inhibitor. This is U15-hexatoxin-Hi1a from Hadronyche infensa (Fraser island funnel-web spider).